The primary structure comprises 359 residues: Alanine racemase (359 aa).

Catalysis depends on Lys35, which acts as the Proton acceptor; specific for D-alanine. Lys35 carries the post-translational modification N6-(pyridoxal phosphate)lysine. Arg131 lines the substrate pocket. Catalysis depends on Tyr253, which acts as the Proton acceptor; specific for L-alanine. Residue Met301 coordinates substrate.

The protein belongs to the alanine racemase family. The cofactor is pyridoxal 5'-phosphate.

It catalyses the reaction L-alanine = D-alanine. The protein operates within amino-acid biosynthesis; D-alanine biosynthesis; D-alanine from L-alanine: step 1/1. In terms of biological role, catalyzes the interconversion of L-alanine and D-alanine. May also act on other amino acids. In Laribacter hongkongensis (strain HLHK9), this protein is Alanine racemase (alr).